A 509-amino-acid chain; its full sequence is 3-isopropylmalate dehydratase large subunit, chloroplastic (509 aa).

The segment covering 1-24 has biased composition (low complexity); the sequence is MASVISSSPFLCKSSSKSDLGISS. The disordered stretch occupies residues 1-25; it reads MASVISSSPFLCKSSSKSDLGISSF. A chloroplast-targeting transit peptide spans 1–47; it reads MASVISSSPFLCKSSSKSDLGISSFPKSSQISIHRCQKKSISRKIVS. Cys376, Cys445, and Cys448 together coordinate [4Fe-4S] cluster.

The protein belongs to the aconitase/IPM isomerase family. Heterodimer of the large LEUC/IIL1 subunit and the small LEUD (SSU1, SSU2 or SSU3) subunits. It depends on [4Fe-4S] cluster as a cofactor. Expressed in roots, leaves, stems and flowers. Expressed at low levels in siliques.

It localises to the plastid. The protein resides in the chloroplast stroma. The enzyme catalyses (2R,3S)-3-isopropylmalate = (2S)-2-isopropylmalate. It catalyses the reaction a 2-(omega-methylsulfanyl)alkylmalate = a 2-(omega-methylsulfanyl)alkylmaleate + H2O. The catalysed reaction is 2-(3-methylsulfanyl)propylmalate = 2-(2-methylsulfanyl)propylmaleate + H2O. It carries out the reaction a 3-(omega-methylsulfanyl)alkylmalate = a 2-(omega-methylsulfanyl)alkylmaleate + H2O. The enzyme catalyses 2-(2-methylsulfanyl)ethylmalate = 2-(2-methylsulfanyl)ethylmaleate + H2O. It catalyses the reaction 3-(2-methylsulfanyl)ethylmalate = 2-(2-methylsulfanyl)ethylmaleate + H2O. The catalysed reaction is 3-(3-methylsulfanyl)propylmalate = 2-(2-methylsulfanyl)propylmaleate + H2O. The protein operates within amino-acid biosynthesis; L-leucine biosynthesis; L-leucine from 3-methyl-2-oxobutanoate: step 2/4. Functionally, catalyzes the isomerization between 2-isopropylmalate and 3-isopropylmalate, via the formation of 2-isopropylmaleate. Functions in both the biosynthesis of leucine and in the methionine chain elongation pathway of aliphatic glucosinolate formation. In Arabidopsis thaliana (Mouse-ear cress), this protein is 3-isopropylmalate dehydratase large subunit, chloroplastic.